The chain runs to 119 residues: Beta-2-microglobulin (119 aa).

The signal sequence occupies residues 1 to 20; the sequence is MARFVVVALLVLLSVSDLEA. The Ig-like C1-type domain maps to 25–114; that stretch reads PKIQVYSRYP…VTFLTPKTVK (90 aa). C45 and C100 form a disulfide bridge.

This sequence belongs to the beta-2-microglobulin family. In terms of assembly, heterodimer of an alpha chain and a beta chain. Beta-2-microglobulin is the beta-chain of major histocompatibility complex class I molecules.

Its subcellular location is the secreted. Its function is as follows. Component of the class I major histocompatibility complex (MHC). Involved in the presentation of peptide antigens to the immune system. The sequence is that of Beta-2-microglobulin (B2M) from Leontocebus fuscicollis (Brown-mantled tamarin).